The sequence spans 364 residues: Metalloendoproteinase 1-MMP (364 aa).

A signal peptide spans 1 to 28 (MSRNLIYRRNRALCFVLILFCFPYRFGA). A propeptide spans 29–149 (RNTPEAEQST…NNDFLHTTAH (121 aa)) (activation peptide). N-linked (GlcNAc...) asparagine glycosylation is present at Asn49. Positions 128 to 135 (PRCGVSDT) match the Cysteine switch motif. Residue Cys130 participates in Zn(2+) binding. Asp211 is a binding site for Ca(2+). 2 residues coordinate Zn(2+): His221 and Asp223. Ca(2+) is bound by residues Asp228 and Gly229. His236 is a binding site for Zn(2+). Residue Gly243 participates in Ca(2+) binding. His246 contributes to the Zn(2+) binding site. Asp248 and Glu251 together coordinate Ca(2+). Zn(2+) is bound at residue His275. Glu276 is an active-site residue. Residues His279 and His285 each coordinate Zn(2+). A glycan (N-linked (GlcNAc...) asparagine) is linked at Asn338. The GPI-anchor amidated glycine moiety is linked to residue Gly339. Residues 340-364 (TVSHRFLSGNFIGYVLLVVGLILFL) constitute a propeptide, removed in mature form.

The protein belongs to the peptidase M10A family. Matrix metalloproteinases (MMPs) subfamily. Requires Ca(2+) as cofactor. Zn(2+) serves as cofactor. Mostly expressed in flowers, roots and stems, and, to a lower extent, in leaves.

It localises to the cell membrane. With respect to regulation, inhibited by human TIMP-1 and TIMP-2 and by the peptide hydroxamate inhibitor (BB-94). Repressed by acetohydroxamic acid (AHA). Matrix metalloproteinases (MMPs) or matrixins may play a role in the degradation and remodeling of the extracellular matrix (ECM) during development or in response to stresses. Can cleave myelin basic protein as well as fluorigenic peptide substrates, McaPLANvaDpaAR-NH(2) and McaPChaGNvaHADpa-NH(2) 4-fold more efficiently than McaPLGLDpaAR-NH(2) (QF24). Active on myelin basic protein (MBP) and, to some extent, on McaPLGLDpaAR-NH(2) (QF24) and beta-casein. The protein is Metalloendoproteinase 1-MMP of Arabidopsis thaliana (Mouse-ear cress).